A 120-amino-acid chain; its full sequence is Phosphoribosyl-ATP pyrophosphatase (120 aa).

The protein belongs to the PRA-PH family.

Its subcellular location is the cytoplasm. The enzyme catalyses 1-(5-phospho-beta-D-ribosyl)-ATP + H2O = 1-(5-phospho-beta-D-ribosyl)-5'-AMP + diphosphate + H(+). It participates in amino-acid biosynthesis; L-histidine biosynthesis; L-histidine from 5-phospho-alpha-D-ribose 1-diphosphate: step 2/9. The sequence is that of Phosphoribosyl-ATP pyrophosphatase from Methylibium petroleiphilum (strain ATCC BAA-1232 / LMG 22953 / PM1).